Consider the following 530-residue polypeptide: Bifunctional purine biosynthesis protein PurH (530 aa).

The MGS-like domain occupies 1–148 (MENSRPIKRA…KNHKDVGIVV (148 aa)).

It belongs to the PurH family.

It catalyses the reaction (6R)-10-formyltetrahydrofolate + 5-amino-1-(5-phospho-beta-D-ribosyl)imidazole-4-carboxamide = 5-formamido-1-(5-phospho-D-ribosyl)imidazole-4-carboxamide + (6S)-5,6,7,8-tetrahydrofolate. It carries out the reaction IMP + H2O = 5-formamido-1-(5-phospho-D-ribosyl)imidazole-4-carboxamide. It participates in purine metabolism; IMP biosynthesis via de novo pathway; 5-formamido-1-(5-phospho-D-ribosyl)imidazole-4-carboxamide from 5-amino-1-(5-phospho-D-ribosyl)imidazole-4-carboxamide (10-formyl THF route): step 1/1. Its pathway is purine metabolism; IMP biosynthesis via de novo pathway; IMP from 5-formamido-1-(5-phospho-D-ribosyl)imidazole-4-carboxamide: step 1/1. In Psychromonas ingrahamii (strain DSM 17664 / CCUG 51855 / 37), this protein is Bifunctional purine biosynthesis protein PurH.